Here is a 369-residue protein sequence, read N- to C-terminus: Queuine tRNA-ribosyltransferase (369 aa).

Aspartate 90 serves as the catalytic Proton acceptor. Residues 90-94 (DSGGF), aspartate 144, glutamine 186, and glycine 213 each bind substrate. The segment at 244–250 (GVGKPAD) is RNA binding. The active-site Nucleophile is the aspartate 263. 4 residues coordinate Zn(2+): cysteine 301, cysteine 303, cysteine 306, and histidine 332.

Belongs to the queuine tRNA-ribosyltransferase family. As to quaternary structure, homodimer. Within each dimer, one monomer is responsible for RNA recognition and catalysis, while the other monomer binds to the replacement base PreQ1. The cofactor is Zn(2+).

It catalyses the reaction 7-aminomethyl-7-carbaguanine + guanosine(34) in tRNA = 7-aminomethyl-7-carbaguanosine(34) in tRNA + guanine. It participates in tRNA modification; tRNA-queuosine biosynthesis. Catalyzes the base-exchange of a guanine (G) residue with the queuine precursor 7-aminomethyl-7-deazaguanine (PreQ1) at position 34 (anticodon wobble position) in tRNAs with GU(N) anticodons (tRNA-Asp, -Asn, -His and -Tyr). Catalysis occurs through a double-displacement mechanism. The nucleophile active site attacks the C1' of nucleotide 34 to detach the guanine base from the RNA, forming a covalent enzyme-RNA intermediate. The proton acceptor active site deprotonates the incoming PreQ1, allowing a nucleophilic attack on the C1' of the ribose to form the product. After dissociation, two additional enzymatic reactions on the tRNA convert PreQ1 to queuine (Q), resulting in the hypermodified nucleoside queuosine (7-(((4,5-cis-dihydroxy-2-cyclopenten-1-yl)amino)methyl)-7-deazaguanosine). This chain is Queuine tRNA-ribosyltransferase, found in Dichelobacter nodosus (strain VCS1703A).